The chain runs to 131 residues: Aspartate 1-decarboxylase (131 aa).

The active-site Schiff-base intermediate with substrate; via pyruvic acid is serine 25. Serine 25 is modified (pyruvic acid (Ser)). Threonine 57 is a binding site for substrate. The active-site Proton donor is the tyrosine 58. Residue 73–75 (GAA) coordinates substrate.

Belongs to the PanD family. In terms of assembly, heterooctamer of four alpha and four beta subunits. The cofactor is pyruvate. Is synthesized initially as an inactive proenzyme, which is activated by self-cleavage at a specific serine bond to produce a beta-subunit with a hydroxyl group at its C-terminus and an alpha-subunit with a pyruvoyl group at its N-terminus.

The protein resides in the cytoplasm. It carries out the reaction L-aspartate + H(+) = beta-alanine + CO2. Its pathway is cofactor biosynthesis; (R)-pantothenate biosynthesis; beta-alanine from L-aspartate: step 1/1. Catalyzes the pyruvoyl-dependent decarboxylation of aspartate to produce beta-alanine. This chain is Aspartate 1-decarboxylase, found in Acaryochloris marina (strain MBIC 11017).